The following is a 675-amino-acid chain: Glycerophosphocholine phosphodiesterase GPCPD1 (675 aa).

One can recognise a CBM20 domain in the interval 1–115 (MTPSQVTFEI…IIIDDGQFGI (115 aa)). Substrate contacts are provided by residues R70 and 88-89 (HK). S178 and S427 each carry phosphoserine. Residues 321–621 (PLDVGHRGAG…DRIYDWMPEQ (301 aa)) enclose the GP-PDE domain. Y611 bears the Phosphotyrosine mark.

Belongs to the glycerophosphoryl diester phosphodiesterase family. As to expression, widely expressed with highest levels in skeletal muscle and heart.

The protein localises to the cytoplasm. The protein resides in the cytosol. The enzyme catalyses sn-glycerol 3-phosphocholine + H2O = sn-glycerol 3-phosphate + choline + H(+). Its function is as follows. May be involved in the negative regulation of skeletal muscle differentiation, independently of its glycerophosphocholine phosphodiesterase activity. The protein is Glycerophosphocholine phosphodiesterase GPCPD1 (Gpcpd1) of Mus musculus (Mouse).